The sequence spans 373 residues: Probable cysteine protease RD19C (373 aa).

The N-terminal stretch at 1–20 is a signal peptide; sequence MDRVVFFFLIAATLLAGSLG. The propeptide at 21–139 is activation peptide; it reads STVISGEVTD…QTAPILPTSD (119 aa). Disulfide bonds link Cys161/Cys211 and Cys195/Cys245. Cys164 is an active-site residue. N-linked (GlcNAc...) asparagine glycosylation is present at Asn258. Cysteines 301 and 356 form a disulfide. Catalysis depends on residues His307 and Asn334.

Belongs to the peptidase C1 family.

The protein resides in the lytic vacuole. Its function is as follows. Probable thiol protease. This chain is Probable cysteine protease RD19C, found in Arabidopsis thaliana (Mouse-ear cress).